Consider the following 309-residue polypeptide: Acetylglutamate kinase (309 aa).

Substrate-binding positions include 82–83, R104, and N206; that span reads GG.

The protein belongs to the acetylglutamate kinase family. ArgB subfamily.

It localises to the cytoplasm. The enzyme catalyses N-acetyl-L-glutamate + ATP = N-acetyl-L-glutamyl 5-phosphate + ADP. It participates in amino-acid biosynthesis; L-arginine biosynthesis; N(2)-acetyl-L-ornithine from L-glutamate: step 2/4. Catalyzes the ATP-dependent phosphorylation of N-acetyl-L-glutamate. In Cupriavidus metallidurans (strain ATCC 43123 / DSM 2839 / NBRC 102507 / CH34) (Ralstonia metallidurans), this protein is Acetylglutamate kinase.